The following is a 167-amino-acid chain: General odorant-binding protein 1 (167 aa).

The first 22 residues, Met1 to Ala22, serve as a signal peptide directing secretion. Intrachain disulfides connect Cys41–Cys76, Cys72–Cys130, and Cys119–Cys139.

Belongs to the PBP/GOBP family. Antenna.

Functionally, present in the aqueous fluid surrounding olfactory sensory dendrites and are thought to aid in the capture and transport of hydrophobic odorants into and through this fluid. The protein is General odorant-binding protein 1 of Antheraea pernyi (Chinese oak silk moth).